Here is a 1242-residue protein sequence, read N- to C-terminus: DNA excision repair protein ERCC-6-like (1242 aa).

The residue at position 14 (Ser14) is a Phosphoserine. One copy of the TPR 1 repeat lies at 21–54 (YLRYVKEAKEATKNGDLEQALKLFNLAKDIFPNE). A Helicase ATP-binding domain is found at 109-277 (SLYRDGRRGG…WSLFDFACQG (169 aa)). 122 to 129 (DDMGLGKT) contributes to the ATP binding site. Residues 228–231 (DEAH) carry the DEAH box motif. The region spanning 466 to 626 (FLMDLLKKLR…PFRYFSKQEL (161 aa)) is the Helicase C-terminal domain. Residues Ser755 and Ser773 each carry the phosphoserine modification. Thr815 is subject to Phosphothreonine. Residues Ser963, Ser989, Ser998, and Ser1021 each carry the phosphoserine modification. Phosphothreonine is present on Thr1055. Phosphoserine occurs at positions 1061, 1090, and 1110. Residues 1103-1181 (EERLDNSSEA…LSDGQLVDSP (79 aa)) are disordered. Composition is skewed to basic and acidic residues over residues 1105–1121 (RLDNSSEAKVVEDHLEE) and 1130–1140 (APEHTKEDPSR). Polar residues predominate over residues 1141–1156 (ETLSSENKSSQLSTSK). A phosphoserine mark is found at Ser1173 and Ser1180. One copy of the TPR 2 repeat lies at 1192-1225 (YDTLVLHGKELKECGKIQEALDCLVKALDIKSSD).

This sequence belongs to the SNF2/RAD54 helicase family. In terms of assembly, interacts with PLK1, which phosphorylates it. Both proteins are mutually dependent on each other for correct subcellular localization. Interacts (via N-terminal TPR repeat) with BEND3 (via BEN domains 1 and 3); the interaction is direct. Post-translationally, phosphorylation by PLK1 prevents the association with chromosome arms and restricts its localization to the kinetochore-centromere region.

Its subcellular location is the chromosome. The protein resides in the centromere. It is found in the kinetochore. It catalyses the reaction ATP + H2O = ADP + phosphate + H(+). DNA helicase that acts as a tension sensor that associates with catenated DNA which is stretched under tension until it is resolved during anaphase. Functions as ATP-dependent DNA translocase. Can promote Holliday junction branch migration (in vitro). In Bos taurus (Bovine), this protein is DNA excision repair protein ERCC-6-like (ERCC6L).